The primary structure comprises 708 residues: Kin of IRRE-like protein 2 (708 aa).

Positions 1-20 (MLRMRVPALLVLLFCFRGRA) are cleaved as a signal peptide. The Extracellular portion of the chain corresponds to 21–510 (GPSPHFLQQP…GRRDLLPTVR (490 aa)). Ig-like C2-type domains are found at residues 24–118 (PHFL…AQLH), 123–222 (PEAP…ITLS), 227–307 (PEVT…TALD), 312–394 (PILQ…ARLT), and 398–501 (PPVV…ASLG). The cysteines at positions 45 and 103 are disulfide-linked. Residue Asn143 is glycosylated (N-linked (GlcNAc...) asparagine). 2 disulfides stabilise this stretch: Cys146–Cys204 and Cys248–Cys291. The Cell attachment site motif lies at 149 to 151 (RGD). An N-linked (GlcNAc...) asparagine glycan is attached at Asn301. Intrachain disulfides connect Cys333-Cys375 and Cys419-Cys485. Asn484 carries N-linked (GlcNAc...) asparagine glycosylation. A helical transmembrane segment spans residues 511-531 (IVAGVAAATTTLLMVITGVAL). The Cytoplasmic portion of the chain corresponds to 532 to 708 (CCWRHSKASA…PSHPRLQTHV (177 aa)). Positions 545 to 601 (EQKNLMRIPGSSDGSSSRGPEEEETGSREDRGPIVHTDHSDLVLEEEGTLETKDPTN) are disordered. Over residues 553-562 (PGSSDGSSSR) the composition is skewed to low complexity. The segment covering 569 to 586 (TGSREDRGPIVHTDHSDL) has biased composition (basic and acidic residues). Ser571 carries the post-translational modification Phosphoserine. Tyr603, Tyr604, and Tyr661 each carry phosphotyrosine. The interval 684-708 (LAPGTPPFPYAAFPTPSHPRLQTHV) is disordered.

The protein belongs to the immunoglobulin superfamily. In terms of assembly, homodimer. Interacts with NPHS2/podocin (via the C-terminus). Interacts with NPHS1 (via the Ig-like domains). Interacts with FYN. Post-translationally, N-glycosylated. The extracellular domain is cleaved leading to the generation of a soluble fragment and a membrane-bound C-terminal fragment, which is further cleaved by gamma-secretase. In terms of tissue distribution, highly expressed in beta-cells of the pancreatic islets.

It is found in the cell membrane. Its function is as follows. May regulate basal insulin secretion. This Homo sapiens (Human) protein is Kin of IRRE-like protein 2 (KIRREL2).